We begin with the raw amino-acid sequence, 337 residues long: Cholinesterase 2 (337 aa).

Serine 99 serves as the catalytic Acyl-ester intermediate. A disulfide bond links cysteine 153 and cysteine 165. The active-site Charge relay system is glutamate 224. A glycan (N-linked (GlcNAc...) asparagine) is linked at asparagine 290.

It belongs to the type-B carboxylesterase/lipase family.

The enzyme catalyses an acylcholine + H2O = a carboxylate + choline + H(+). In Branchiostoma lanceolatum (Common lancelet), this protein is Cholinesterase 2 (CHE2).